Here is a 417-residue protein sequence, read N- to C-terminus: Serine hydroxymethyltransferase (417 aa).

Residues Leu-121 and 125-127 (GHL) each bind (6S)-5,6,7,8-tetrahydrofolate. Residue Lys-229 is modified to N6-(pyridoxal phosphate)lysine. 355-357 (SPF) is a binding site for (6S)-5,6,7,8-tetrahydrofolate.

The protein belongs to the SHMT family. As to quaternary structure, homodimer. Pyridoxal 5'-phosphate serves as cofactor.

It localises to the cytoplasm. The catalysed reaction is (6R)-5,10-methylene-5,6,7,8-tetrahydrofolate + glycine + H2O = (6S)-5,6,7,8-tetrahydrofolate + L-serine. It functions in the pathway one-carbon metabolism; tetrahydrofolate interconversion. Its pathway is amino-acid biosynthesis; glycine biosynthesis; glycine from L-serine: step 1/1. In terms of biological role, catalyzes the reversible interconversion of serine and glycine with tetrahydrofolate (THF) serving as the one-carbon carrier. This reaction serves as the major source of one-carbon groups required for the biosynthesis of purines, thymidylate, methionine, and other important biomolecules. Also exhibits THF-independent aldolase activity toward beta-hydroxyamino acids, producing glycine and aldehydes, via a retro-aldol mechanism. In Shewanella amazonensis (strain ATCC BAA-1098 / SB2B), this protein is Serine hydroxymethyltransferase.